Consider the following 254-residue polypeptide: Serotonin N-acetyltransferase 1, chloroplastic (254 aa).

The transit peptide at 1 to 74 (MAPAASASAS…LRSGFLKSNN (74 aa)) directs the protein to the chloroplast. An N-acetyltransferase domain is found at 111 to 254 (IIFSSAGDVN…IKGMFWYPRF (144 aa)).

It belongs to the acetyltransferase family. In terms of tissue distribution, expressed in roots and shoots.

It localises to the plastid. The protein localises to the chloroplast. Its subcellular location is the nucleus. The catalysed reaction is serotonin + acetyl-CoA = N-acetylserotonin + CoA + H(+). It catalyses the reaction tyramine + acetyl-CoA = N-acetyltyramine + CoA + H(+). The enzyme catalyses tryptamine + acetyl-CoA = N-acetyltryptamine + CoA + H(+). It carries out the reaction 5-methoxytryptamine + acetyl-CoA = melatonin + CoA + H(+). Its pathway is aromatic compound metabolism; melatonin biosynthesis; melatonin from serotonin: step 1/2. Catalyzes the N-acetylation of serotonin into N-acetylserotonin, the penultimate step in the synthesis of melatonin. Catalyzes in vitro the N-acetylation of tryptamine to produce N-acetyltryptamine, 5-methoxytryptamine to produce melatonin and tyramine to produce N-acetyltyramine. The chain is Serotonin N-acetyltransferase 1, chloroplastic from Oryza sativa subsp. japonica (Rice).